Reading from the N-terminus, the 206-residue chain is Ras-related protein RABG3e (206 aa).

15-22 is a GTP binding site; that stretch reads GDSGVGKT. The Effector region signature appears at 37–45; the sequence is YKATIGADF. GTP is bound by residues 63–67, 125–128, and 158–159; these read DTAGQ, NKID, and SA. 2 S-geranylgeranyl cysteine lipidation sites follow: Cys-204 and Cys-206. Cys-206 carries the post-translational modification Cysteine methyl ester.

Belongs to the small GTPase superfamily. Rab family.

Its subcellular location is the cell membrane. Functionally, intracellular vesicle trafficking and protein transport. May play a role in adaptation to stress by recylcing macromolecules in specific cellular compartments. This Arabidopsis thaliana (Mouse-ear cress) protein is Ras-related protein RABG3e (RABG3E).